A 514-amino-acid polypeptide reads, in one-letter code: Maturase K (514 aa).

This sequence belongs to the intron maturase 2 family. MatK subfamily.

Its subcellular location is the plastid. The protein resides in the chloroplast. Usually encoded in the trnK tRNA gene intron. Probably assists in splicing its own and other chloroplast group II introns. The sequence is that of Maturase K from Drosophyllum lusitanicum (Portuguese sundew).